We begin with the raw amino-acid sequence, 195 residues long: Peptidyl-tRNA hydrolase (195 aa).

Y18 serves as a coordination point for tRNA. The Proton acceptor role is filled by H23. Y69, N71, and N117 together coordinate tRNA.

Belongs to the PTH family. In terms of assembly, monomer.

It is found in the cytoplasm. The catalysed reaction is an N-acyl-L-alpha-aminoacyl-tRNA + H2O = an N-acyl-L-amino acid + a tRNA + H(+). Functionally, hydrolyzes ribosome-free peptidyl-tRNAs (with 1 or more amino acids incorporated), which drop off the ribosome during protein synthesis, or as a result of ribosome stalling. Its function is as follows. Catalyzes the release of premature peptidyl moieties from peptidyl-tRNA molecules trapped in stalled 50S ribosomal subunits, and thus maintains levels of free tRNAs and 50S ribosomes. The chain is Peptidyl-tRNA hydrolase from Nitrosomonas europaea (strain ATCC 19718 / CIP 103999 / KCTC 2705 / NBRC 14298).